We begin with the raw amino-acid sequence, 493 residues long: 3-octaprenyl-4-hydroxybenzoate carboxy-lyase (493 aa).

Asparagine 172 is a binding site for Mn(2+). Residues 175 to 177 (IYR), 189 to 191 (RWL), and 194 to 195 (RG) contribute to the prenylated FMN site. Glutamate 238 contributes to the Mn(2+) binding site. The active-site Proton donor is the aspartate 287.

The protein belongs to the UbiD family. Homohexamer. Prenylated FMN is required as a cofactor. It depends on Mn(2+) as a cofactor.

The protein resides in the cell membrane. The enzyme catalyses a 4-hydroxy-3-(all-trans-polyprenyl)benzoate + H(+) = a 2-(all-trans-polyprenyl)phenol + CO2. It participates in cofactor biosynthesis; ubiquinone biosynthesis. Its function is as follows. Catalyzes the decarboxylation of 3-octaprenyl-4-hydroxy benzoate to 2-octaprenylphenol, an intermediate step in ubiquinone biosynthesis. This is 3-octaprenyl-4-hydroxybenzoate carboxy-lyase from Shewanella halifaxensis (strain HAW-EB4).